The primary structure comprises 471 residues: Putative ETHYLENE INSENSITIVE 3-like 4 protein (471 aa).

The interval 280 to 316 (DLKISEDQDDQESSGSKRKSESMEPSKSVYTCQNSSC) is disordered. Polar residues predominate over residues 304 to 316 (PSKSVYTCQNSSC).

The protein belongs to the EIN3 family.

The protein localises to the nucleus. In terms of biological role, putative transcription factor that may be involved in the ethylene response pathway. The sequence is that of Putative ETHYLENE INSENSITIVE 3-like 4 protein (EIL4) from Arabidopsis thaliana (Mouse-ear cress).